A 175-amino-acid chain; its full sequence is Alpha-crystallin B chain (175 aa).

M1 is subject to N-acetylmethionine. Phosphoserine occurs at positions 19, 45, and 59. One can recognise a sHSP domain in the interval 56-164; the sequence is RAPSWIDTGL…PERTIPITRE (109 aa). H83 provides a ligand contact to Zn(2+). At K92 the chain carries N6-acetyllysine. H104, E106, H111, and H119 together coordinate Zn(2+). Residues 142–175 are disordered; it reads VLTVNGPRKQASGPERTIPITREEKPAVTAAPKK. Position 166 is an N6-acetyllysine (K166). T170 carries an O-linked (GlcNAc) threonine glycan.

The protein belongs to the small heat shock protein (HSP20) family. In terms of assembly, heteromer composed of three CRYAA and one CRYAB subunits. Aggregates with homologous proteins, including the small heat shock protein HSPB1, to form large heteromeric complexes. Inter-subunit bridging via zinc ions enhances stability, which is crucial as there is no protein turn over in the lens. Interacts with HSPBAP1. Interacts with TTN/titin. Interacts with TMEM109; in the cellular response to DNA damage. Interacts with DES; binds rapidly during early stages of DES filament assembly and a reduced binding seen in the later stages. Interacts with TMED10; the interaction mediates the translocation from the cytoplasm into the ERGIC (endoplasmic reticulum-Golgi intermediate compartment) and thereby secretion. Interacts with ATP6V1A and with MTOR, forming a ternary complex. As to expression, lens as well as other tissues.

Its subcellular location is the cytoplasm. It localises to the nucleus. The protein resides in the secreted. It is found in the lysosome. May contribute to the transparency and refractive index of the lens. Has chaperone-like activity, preventing aggregation of various proteins under a wide range of stress conditions. In lens epithelial cells, stabilizes the ATP6V1A protein, preventing its degradation by the proteasome. This Rattus norvegicus (Rat) protein is Alpha-crystallin B chain.